Here is a 640-residue protein sequence, read N- to C-terminus: Chaperone protein DnaK (640 aa).

Residue Thr-201 is modified to Phosphothreonine; by autocatalysis. A compositionally biased stretch (low complexity) spans 603–621 (AASADQGGAPGADAGNAGK). The disordered stretch occupies residues 603 to 625 (AASADQGGAPGADAGNAGKAQDD).

It belongs to the heat shock protein 70 family.

In terms of biological role, acts as a chaperone. In Stenotrophomonas maltophilia (strain K279a), this protein is Chaperone protein DnaK.